A 506-amino-acid polypeptide reads, in one-letter code: Tyrosine-protein kinase FRK (506 aa).

Residues 43 to 111 form the SH3 domain; that stretch reads SQGQYFVALF…PSNYVAEDRS (69 aa). The SH2 domain occupies 117–209; it reads WFFGAIKRAD…GLCVKLEKPC (93 aa). Threonine 179 is modified (phosphothreonine). The Protein kinase domain occupies 235–492; the sequence is IQLLKRLGSG…TLHWKLEDYF (258 aa). ATP contacts are provided by residues 241–249 and lysine 263; that span reads LGSGQFGEV. Aspartate 355 functions as the Proton acceptor in the catalytic mechanism. The residue at position 388 (tyrosine 388) is a Phosphotyrosine; by autocatalysis.

Belongs to the protein kinase superfamily. Tyr protein kinase family. SRC subfamily. Interacts (via the SH3-domain) with PTEN. Interacts with RB1. Highly expressed in stomach, small intestine and colon. Concentrated in the brush border membranes of epithelial cells, throughout the maturation axis of the adult small intestine.

It is found in the cytoplasm. It localises to the nucleus. The catalysed reaction is L-tyrosyl-[protein] + ATP = O-phospho-L-tyrosyl-[protein] + ADP + H(+). Its function is as follows. Non-receptor tyrosine-protein kinase that negatively regulates cell proliferation. Positively regulates PTEN protein stability through phosphorylation of PTEN on 'Tyr-336', which in turn prevents its ubiquitination and degradation, possibly by reducing its binding to NEDD4. May function as a tumor suppressor. The sequence is that of Tyrosine-protein kinase FRK (Frk) from Rattus norvegicus (Rat).